The sequence spans 328 residues: Ribosomal RNA small subunit methyltransferase C (328 aa).

It belongs to the methyltransferase superfamily. RsmC family. Monomer.

The protein resides in the cytoplasm. The catalysed reaction is guanosine(1207) in 16S rRNA + S-adenosyl-L-methionine = N(2)-methylguanosine(1207) in 16S rRNA + S-adenosyl-L-homocysteine + H(+). Functionally, specifically methylates the guanine in position 1207 of 16S rRNA in the 30S particle. This chain is Ribosomal RNA small subunit methyltransferase C, found in Pasteurella multocida (strain Pm70).